A 162-amino-acid chain; its full sequence is uncharacterized protein (162 aa).

The signal sequence occupies residues 1-21; it reads MEGIMKKFFALMTLIAGISFS. The stretch at 32–118 forms a coiled coil; it reads VIRESKFIAK…KKAELEKMVF (87 aa).

This sequence belongs to the Skp family.

This is an uncharacterized protein from Aquifex aeolicus (strain VF5).